The following is a 35-amino-acid chain: Purotoxin-1 (35 aa).

4 disulfides stabilise this stretch: Cys-3/Cys-16, Cys-10/Cys-21, Cys-15/Cys-32, and Cys-23/Cys-30.

This sequence belongs to the neurotoxin 33 family. As to expression, expressed by the venom gland.

Its subcellular location is the secreted. In terms of biological role, inhibits P2RX3 receptors. Has an analgesic effect in rat. Enhances the high-affinity desensitization of P2RX3 purinoceptors. At 50 nM, decreases the IC(50) for ambient ATP from 46.5 nM to 12.7 nM in mouse P2RX3. This Alopecosa marikovskyi (Wolf spider) protein is Purotoxin-1.